We begin with the raw amino-acid sequence, 223 residues long: NAD(P)H-hydrate epimerase (223 aa).

A YjeF N-terminal domain is found at 9-211; the sequence is AIKLDEELMG…ELKDKLHLIL (203 aa). 60-64 serves as a coordination point for (6S)-NADPHX; sequence NNGGD. 2 residues coordinate K(+): Asn61 and Asp120. (6S)-NADPHX contacts are provided by residues 124–130 and Asp153; that span reads GFSFKGP. Residue Ser156 coordinates K(+).

Belongs to the NnrE/AIBP family. Requires K(+) as cofactor.

It carries out the reaction (6R)-NADHX = (6S)-NADHX. It catalyses the reaction (6R)-NADPHX = (6S)-NADPHX. Catalyzes the epimerization of the S- and R-forms of NAD(P)HX, a damaged form of NAD(P)H that is a result of enzymatic or heat-dependent hydration. This is a prerequisite for the S-specific NAD(P)H-hydrate dehydratase to allow the repair of both epimers of NAD(P)HX. This Entamoeba histolytica (strain ATCC 30459 / HM-1:IMSS / ABRM) protein is NAD(P)H-hydrate epimerase.